The chain runs to 343 residues: UDP-N-acetylglucosamine--N-acetylmuramyl-(pentapeptide) pyrophosphoryl-undecaprenol N-acetylglucosamine transferase (343 aa).

Residues 10–12, Asn113, Ser174, and Gln275 each bind UDP-N-acetyl-alpha-D-glucosamine; that span reads TGG.

It belongs to the glycosyltransferase 28 family. MurG subfamily.

It is found in the cell membrane. The catalysed reaction is di-trans,octa-cis-undecaprenyl diphospho-N-acetyl-alpha-D-muramoyl-L-alanyl-D-glutamyl-meso-2,6-diaminopimeloyl-D-alanyl-D-alanine + UDP-N-acetyl-alpha-D-glucosamine = di-trans,octa-cis-undecaprenyl diphospho-[N-acetyl-alpha-D-glucosaminyl-(1-&gt;4)]-N-acetyl-alpha-D-muramoyl-L-alanyl-D-glutamyl-meso-2,6-diaminopimeloyl-D-alanyl-D-alanine + UDP + H(+). It functions in the pathway cell wall biogenesis; peptidoglycan biosynthesis. Its function is as follows. Cell wall formation. Catalyzes the transfer of a GlcNAc subunit on undecaprenyl-pyrophosphoryl-MurNAc-pentapeptide (lipid intermediate I) to form undecaprenyl-pyrophosphoryl-MurNAc-(pentapeptide)GlcNAc (lipid intermediate II). The polypeptide is UDP-N-acetylglucosamine--N-acetylmuramyl-(pentapeptide) pyrophosphoryl-undecaprenol N-acetylglucosamine transferase (Wolbachia sp. subsp. Drosophila simulans (strain wRi)).